The chain runs to 490 residues: Glutamyl-tRNA(Gln) amidotransferase subunit A (490 aa).

Residues Lys-80 and Ser-155 each act as charge relay system in the active site. The active-site Acyl-ester intermediate is Ser-179.

Belongs to the amidase family. GatA subfamily. In terms of assembly, heterotrimer of A, B and C subunits.

It catalyses the reaction L-glutamyl-tRNA(Gln) + L-glutamine + ATP + H2O = L-glutaminyl-tRNA(Gln) + L-glutamate + ADP + phosphate + H(+). In terms of biological role, allows the formation of correctly charged Gln-tRNA(Gln) through the transamidation of misacylated Glu-tRNA(Gln) in organisms which lack glutaminyl-tRNA synthetase. The reaction takes place in the presence of glutamine and ATP through an activated gamma-phospho-Glu-tRNA(Gln). The sequence is that of Glutamyl-tRNA(Gln) amidotransferase subunit A from Brevibacillus brevis (strain 47 / JCM 6285 / NBRC 100599).